The sequence spans 126 residues: Glycine cleavage system H protein (126 aa).

The 83-residue stretch at 22 to 104 folds into the Lipoyl-binding domain; it reads VATIGITEYA…YEKAWMVKVE (83 aa). Lysine 63 is subject to N6-lipoyllysine.

Belongs to the GcvH family. The glycine cleavage system is composed of four proteins: P, T, L and H. Requires (R)-lipoate as cofactor.

Functionally, the glycine cleavage system catalyzes the degradation of glycine. The H protein shuttles the methylamine group of glycine from the P protein to the T protein. In terms of biological role, is also involved in protein lipoylation via its role as an octanoyl/lipoyl carrier protein intermediate. In Staphylococcus aureus (strain JH1), this protein is Glycine cleavage system H protein.